The primary structure comprises 177 residues: Large ribosomal subunit protein uL6 (177 aa).

It belongs to the universal ribosomal protein uL6 family. Part of the 50S ribosomal subunit.

Functionally, this protein binds to the 23S rRNA, and is important in its secondary structure. It is located near the subunit interface in the base of the L7/L12 stalk, and near the tRNA binding site of the peptidyltransferase center. The sequence is that of Large ribosomal subunit protein uL6 from Methylobacterium sp. (strain 4-46).